The following is a 183-amino-acid chain: Ribosome rescue factor SmrB (183 aa).

The region spanning 98–173 (LDLHGLTQLQ…GDAALLVLIE (76 aa)) is the Smr domain.

Belongs to the SmrB family. In terms of assembly, associates with collided ribosomes, but not with correctly translating polysomes.

Its function is as follows. Acts as a ribosome collision sensor. Detects stalled/collided disomes (pairs of ribosomes where the leading ribosome is stalled and a second ribosome has collided with it) and endonucleolytically cleaves mRNA at the 5' boundary of the stalled ribosome. Stalled/collided disomes form a new interface (primarily via the 30S subunits) that binds SmrB. Cleaved mRNA becomes available for tmRNA ligation, leading to ribosomal subunit dissociation and rescue of stalled ribosomes. The polypeptide is Ribosome rescue factor SmrB (Escherichia fergusonii (strain ATCC 35469 / DSM 13698 / CCUG 18766 / IAM 14443 / JCM 21226 / LMG 7866 / NBRC 102419 / NCTC 12128 / CDC 0568-73)).